Here is a 41-residue protein sequence, read N- to C-terminus: Large ribosomal subunit protein bL36 (41 aa).

The protein belongs to the bacterial ribosomal protein bL36 family.

This is Large ribosomal subunit protein bL36 from Rhodopseudomonas palustris (strain BisA53).